The sequence spans 405 residues: Phosphoglycerate kinase (405 aa).

Residues 21–23, Arg36, 59–62, Arg119, and Arg161 contribute to the substrate site; these read DFN and HLGR. Residues Lys212, Gly301, Glu332, and 361 to 364 each bind ATP; that span reads GGDS.

The protein belongs to the phosphoglycerate kinase family. As to quaternary structure, monomer.

Its subcellular location is the cytoplasm. The enzyme catalyses (2R)-3-phosphoglycerate + ATP = (2R)-3-phospho-glyceroyl phosphate + ADP. It functions in the pathway carbohydrate degradation; glycolysis; pyruvate from D-glyceraldehyde 3-phosphate: step 2/5. The sequence is that of Phosphoglycerate kinase from Leuconostoc mesenteroides subsp. mesenteroides (strain ATCC 8293 / DSM 20343 / BCRC 11652 / CCM 1803 / JCM 6124 / NCDO 523 / NBRC 100496 / NCIMB 8023 / NCTC 12954 / NRRL B-1118 / 37Y).